A 549-amino-acid polypeptide reads, in one-letter code: SET and MYND domain-containing protein DDB_G0277331 (549 aa).

In terms of domain architecture, SET spans 27 to 283 (KGIELRYCDG…KDEELFINYS (257 aa)). 8 residues coordinate Zn(2+): Cys-71, Cys-74, Cys-90, Cys-93, Cys-99, Cys-103, His-111, and Cys-115. The MYND-type zinc finger occupies 71–115 (CDECLKNKLDLEEGKTLKRCSNCKLVYYCSTDCQTKAWKIHKQEC). Residues 340–401 (NINNNNNNNN…IIKNLQNKLS (62 aa)) are a coiled coil.

This sequence belongs to the class V-like SAM-binding methyltransferase superfamily.

Probable methyltransferase. This is SET and MYND domain-containing protein DDB_G0277331 from Dictyostelium discoideum (Social amoeba).